Here is a 122-residue protein sequence, read N- to C-terminus: Large ribosomal subunit protein uL14 (122 aa).

This sequence belongs to the universal ribosomal protein uL14 family. In terms of assembly, part of the 50S ribosomal subunit. Forms a cluster with proteins L3 and L19. In the 70S ribosome, L14 and L19 interact and together make contacts with the 16S rRNA in bridges B5 and B8.

In terms of biological role, binds to 23S rRNA. Forms part of two intersubunit bridges in the 70S ribosome. This is Large ribosomal subunit protein uL14 from Alcanivorax borkumensis (strain ATCC 700651 / DSM 11573 / NCIMB 13689 / SK2).